We begin with the raw amino-acid sequence, 588 residues long: Glycoprotein (588 aa).

Positions 1 to 22 are cleaved as a signal peptide; sequence MSILVIILILPILFGEVPPVNS. Topologically, residues 23 to 547 are virion surface; sequence GRVVDLNRNV…TTLEEEVKHG (525 aa). A helical transmembrane segment spans residues 548–568; the sequence is VIIVFFTVIGLIIAVPTLKML. Residues 569-588 lie on the Intravirion side of the membrane; sequence LKGRRPYEPVKSPVVWGGPR.

Belongs to the nucleorhabdovirus glycoprotein family. In terms of assembly, homotrimer. Interacts with matrix protein. Glycosylated by host. Glycosylation is crucial for glycoprotein export at the cell surface.

The protein resides in the virion membrane. In terms of biological role, attaches the virus to host cellular receptor, inducing endocytosis of the virion. In the endosome, the acidic pH induces conformational changes in the glycoprotein trimer, which trigger fusion between virus and cell membrane. The chain is Glycoprotein (G) from Taro vein chlorosis virus (TAVCV).